The primary structure comprises 313 residues: 4-hydroxy-3-methylbut-2-enyl diphosphate reductase (313 aa).

Cysteine 20 lines the [4Fe-4S] cluster pocket. Residues histidine 49 and histidine 82 each contribute to the (2E)-4-hydroxy-3-methylbut-2-enyl diphosphate site. 2 residues coordinate dimethylallyl diphosphate: histidine 49 and histidine 82. Residues histidine 49 and histidine 82 each coordinate isopentenyl diphosphate. Position 104 (cysteine 104) interacts with [4Fe-4S] cluster. Residue histidine 132 coordinates (2E)-4-hydroxy-3-methylbut-2-enyl diphosphate. Residue histidine 132 participates in dimethylallyl diphosphate binding. Histidine 132 is an isopentenyl diphosphate binding site. Glutamate 134 serves as the catalytic Proton donor. Threonine 172 is a binding site for (2E)-4-hydroxy-3-methylbut-2-enyl diphosphate. Cysteine 201 is a [4Fe-4S] cluster binding site. Positions 229, 230, 231, and 273 each coordinate (2E)-4-hydroxy-3-methylbut-2-enyl diphosphate. The dimethylallyl diphosphate site is built by serine 229, serine 230, asparagine 231, and serine 273. Isopentenyl diphosphate is bound by residues serine 229, serine 230, asparagine 231, and serine 273.

This sequence belongs to the IspH family. Requires [4Fe-4S] cluster as cofactor.

The catalysed reaction is isopentenyl diphosphate + 2 oxidized [2Fe-2S]-[ferredoxin] + H2O = (2E)-4-hydroxy-3-methylbut-2-enyl diphosphate + 2 reduced [2Fe-2S]-[ferredoxin] + 2 H(+). It carries out the reaction dimethylallyl diphosphate + 2 oxidized [2Fe-2S]-[ferredoxin] + H2O = (2E)-4-hydroxy-3-methylbut-2-enyl diphosphate + 2 reduced [2Fe-2S]-[ferredoxin] + 2 H(+). It participates in isoprenoid biosynthesis; dimethylallyl diphosphate biosynthesis; dimethylallyl diphosphate from (2E)-4-hydroxy-3-methylbutenyl diphosphate: step 1/1. Its pathway is isoprenoid biosynthesis; isopentenyl diphosphate biosynthesis via DXP pathway; isopentenyl diphosphate from 1-deoxy-D-xylulose 5-phosphate: step 6/6. Catalyzes the conversion of 1-hydroxy-2-methyl-2-(E)-butenyl 4-diphosphate (HMBPP) into a mixture of isopentenyl diphosphate (IPP) and dimethylallyl diphosphate (DMAPP). Acts in the terminal step of the DOXP/MEP pathway for isoprenoid precursor biosynthesis. The sequence is that of 4-hydroxy-3-methylbut-2-enyl diphosphate reductase from Desulfotalea psychrophila (strain LSv54 / DSM 12343).